Consider the following 98-residue polypeptide: Small ribosomal subunit protein bS18 (98 aa).

It belongs to the bacterial ribosomal protein bS18 family. Part of the 30S ribosomal subunit. Forms a tight heterodimer with protein bS6.

Binds as a heterodimer with protein bS6 to the central domain of the 16S rRNA, where it helps stabilize the platform of the 30S subunit. This Flavobacterium psychrophilum (strain ATCC 49511 / DSM 21280 / CIP 103535 / JIP02/86) protein is Small ribosomal subunit protein bS18.